The primary structure comprises 107 residues: N(4)-acetylcytidine amidohydrolase (107 aa).

Positions Thr9–Ile105 constitute an ASCH domain. Lys23 acts as the Proton acceptor in catalysis. Thr26 acts as the Nucleophile in catalysis. Residue Glu76 is the Proton donor of the active site.

This sequence belongs to the N(4)-acetylcytidine amidohydrolase family.

It catalyses the reaction N(4)-acetylcytidine + H2O = cytidine + acetate + H(+). The catalysed reaction is N(4)-acetyl-2'-deoxycytidine + H2O = 2'-deoxycytidine + acetate + H(+). It carries out the reaction N(4)-acetylcytosine + H2O = cytosine + acetate + H(+). Its function is as follows. Catalyzes the hydrolysis of N(4)-acetylcytidine (ac4C). The sequence is that of N(4)-acetylcytidine amidohydrolase from Vibrio parahaemolyticus serotype O3:K6 (strain RIMD 2210633).